Here is a 362-residue protein sequence, read N- to C-terminus: Phosphoserine aminotransferase (362 aa).

2 residues coordinate L-glutamate: Ser-9 and Arg-42. Residues 76 to 77 (GR), Trp-102, Thr-153, Asp-174, and Gln-197 each bind pyridoxal 5'-phosphate. Lys-198 is subject to N6-(pyridoxal phosphate)lysine. 239–240 (NT) is a binding site for pyridoxal 5'-phosphate.

Belongs to the class-V pyridoxal-phosphate-dependent aminotransferase family. SerC subfamily. Homodimer. It depends on pyridoxal 5'-phosphate as a cofactor.

The protein localises to the cytoplasm. It carries out the reaction O-phospho-L-serine + 2-oxoglutarate = 3-phosphooxypyruvate + L-glutamate. The catalysed reaction is 4-(phosphooxy)-L-threonine + 2-oxoglutarate = (R)-3-hydroxy-2-oxo-4-phosphooxybutanoate + L-glutamate. It participates in amino-acid biosynthesis; L-serine biosynthesis; L-serine from 3-phospho-D-glycerate: step 2/3. It functions in the pathway cofactor biosynthesis; pyridoxine 5'-phosphate biosynthesis; pyridoxine 5'-phosphate from D-erythrose 4-phosphate: step 3/5. Functionally, catalyzes the reversible conversion of 3-phosphohydroxypyruvate to phosphoserine and of 3-hydroxy-2-oxo-4-phosphonooxybutanoate to phosphohydroxythreonine. The protein is Phosphoserine aminotransferase of Escherichia fergusonii (strain ATCC 35469 / DSM 13698 / CCUG 18766 / IAM 14443 / JCM 21226 / LMG 7866 / NBRC 102419 / NCTC 12128 / CDC 0568-73).